A 382-amino-acid chain; its full sequence is D-alanine--D-alanine ligase (382 aa).

Residues 139–348 form the ATP-grasp domain; the sequence is KRLMRDAGLP…PPALMDALIA (210 aa). Residue 168–223 coordinates ATP; sequence EALESRTLFVKPANMGSSVGVSRVADAGQFDQALAHAFAYDEKILIERAVPRAREI. Residues D300, E315, and N317 each coordinate Mg(2+).

It belongs to the D-alanine--D-alanine ligase family. It depends on Mg(2+) as a cofactor. Mn(2+) is required as a cofactor.

It is found in the cytoplasm. The catalysed reaction is 2 D-alanine + ATP = D-alanyl-D-alanine + ADP + phosphate + H(+). Its pathway is cell wall biogenesis; peptidoglycan biosynthesis. Its function is as follows. Cell wall formation. The sequence is that of D-alanine--D-alanine ligase from Methylobacterium sp. (strain 4-46).